The primary structure comprises 346 residues: Elongation factor Ts (346 aa).

Residues 80 to 83 (TDFV) are involved in Mg(2+) ion dislocation from EF-Tu.

Belongs to the EF-Ts family.

The protein resides in the cytoplasm. Functionally, associates with the EF-Tu.GDP complex and induces the exchange of GDP to GTP. It remains bound to the aminoacyl-tRNA.EF-Tu.GTP complex up to the GTP hydrolysis stage on the ribosome. The polypeptide is Elongation factor Ts (Streptococcus agalactiae serotype Ia (strain ATCC 27591 / A909 / CDC SS700)).